The following is a 905-amino-acid chain: Transcriptional regulator MNL1 (905 aa).

A compositionally biased stretch (polar residues) spans 1–29 (MDSHNNIDQSVSELLSDPASVQQSYNSQL). Disordered regions lie at residues 1–34 (MDSHNNIDQSVSELLSDPASVQQSYNSQLRGPEF), 312–340 (QTQAQAQAHQQQQQQSQQQHSPQDLASHT), 383–419 (MDQVPSSLHRPSFDLYNHRPSIDSQHSQQSQQRNARY), 434–460 (SEKNTNHNNRSPPTPPTSTSSPQNLLS), 525–544 (TKEEPEDELMQPKKVKKPKR), 584–613 (NISSHHSSGTPSITTGAGGNTLEHSISESS), 625–671 (NVGK…GTVE), and 685–733 (PASE…TSST). Residues 312–334 (QTQAQAQAHQQQQQQSQQQHSPQ) show a composition bias toward low complexity. Over residues 439–460 (NHNNRSPPTPPTSTSSPQNLLS) the composition is skewed to low complexity. Residues 584-598 (NISSHHSSGTPSITT) are compositionally biased toward polar residues. The span at 628–639 (KRKNKSYRKPKG) shows a compositional bias: basic residues. 2 stretches are compositionally biased toward low complexity: residues 647-669 (QQQQLPLSSGTAGGTSSNNSTGT) and 690-710 (SSLLDNASAGNASASSSEASS). 2 consecutive C2H2-type zinc fingers follow at residues 832 to 855 (YLCNLCQRRFKRHEHLKRHFRSLH) and 861 to 883 (YNCDICHKKFSRSDNLNQHLKIH). Residues 885 to 905 (QEDEKDCADAETGVGMDDASG) form a disordered region.

It is found in the nucleus. Transcription factor that activates stress response genes via SLE (STRE-like) elements. Required for adaptation to weak acid stress such as acetic acid stress, but seems not involved in the response to heat, osmotic, ethanol, nutrient, oxidative, or heavy-metal stress. Activates a subset of the genes that are repressed by NRG1. This is Transcriptional regulator MNL1 (MNL1) from Candida albicans (strain SC5314 / ATCC MYA-2876) (Yeast).